A 416-amino-acid chain; its full sequence is Lipoyl synthase, mitochondrial (416 aa).

Residues 1–33 (MAAASTNRLRLLYTSTRASLPQSTPSILTTRTY) constitute a mitochondrion transit peptide. The tract at residues 20 to 52 (LPQSTPSILTTRTYATTDSSTSATSTPKPRRRT) is disordered. A compositionally biased stretch (low complexity) spans 29–46 (TTRTYATTDSSTSATSTP). Residues C133, C138, C144, C164, C168, C171, and S379 each contribute to the [4Fe-4S] cluster site. The region spanning 147-368 (GGDKAAATAT…QRRAEELGFL (222 aa)) is the Radical SAM core domain.

Belongs to the radical SAM superfamily. Lipoyl synthase family. The cofactor is [4Fe-4S] cluster.

The protein localises to the mitochondrion. It catalyses the reaction [[Fe-S] cluster scaffold protein carrying a second [4Fe-4S](2+) cluster] + N(6)-octanoyl-L-lysyl-[protein] + 2 oxidized [2Fe-2S]-[ferredoxin] + 2 S-adenosyl-L-methionine + 4 H(+) = [[Fe-S] cluster scaffold protein] + N(6)-[(R)-dihydrolipoyl]-L-lysyl-[protein] + 4 Fe(3+) + 2 hydrogen sulfide + 2 5'-deoxyadenosine + 2 L-methionine + 2 reduced [2Fe-2S]-[ferredoxin]. It participates in protein modification; protein lipoylation via endogenous pathway; protein N(6)-(lipoyl)lysine from octanoyl-[acyl-carrier-protein]: step 2/2. Functionally, catalyzes the radical-mediated insertion of two sulfur atoms into the C-6 and C-8 positions of the octanoyl moiety bound to the lipoyl domains of lipoate-dependent enzymes, thereby converting the octanoylated domains into lipoylated derivatives. This Aspergillus niger (strain ATCC MYA-4892 / CBS 513.88 / FGSC A1513) protein is Lipoyl synthase, mitochondrial.